Here is a 181-residue protein sequence, read N- to C-terminus: Prepronociceptin (181 aa).

The first 19 residues, 1–19, serve as a signal peptide directing secretion; the sequence is MKILFCDVLLLSLLSSVFS. The propeptide occupies 20–95; sequence SCPEDCLTCQ…QSKASEMQHL (76 aa). A disordered region spans residues 103-125; the sequence is SVVQARDAEPEADAEPVADEADE. A run of 2 repeats spans residues 109–114 and 115–120. The tract at residues 109 to 120 is 2 X 6 AA tandem repeats of D-A-E-P-X-A; it reads DAEPEADAEPVA. Residues 112–125 are compositionally biased toward acidic residues; the sequence is PEADAEPVADEADE. Positions 174–181 are excised as a propeptide; it reads TLHQNGNV.

Belongs to the opioid neuropeptide precursor family. In terms of processing, specific enzymatic cleavages at paired basic residues probably yield other active peptides besides nociceptin. The N-terminal domain contains 6 conserved cysteines thought to be involved in disulfide bonding and/or processing. In terms of tissue distribution, expressed predominantly in the spinal cord and brain, being more abundant in the hypothalamus and striatum. Also found in small amounts in ovary.

Its subcellular location is the secreted. Its function is as follows. Ligand of the opioid receptor-like receptor OPRL1. It may act as a transmitter in the brain by modulating nociceptive and locomotor behavior. May be involved in neuronal differentiation and development. Functionally, blocks nociceptin action in pain transmission by inhibiting nociceptin-induced hyperalgesia and allodynia. In terms of biological role, has potent analgesic activity. In Rattus norvegicus (Rat), this protein is Prepronociceptin (Pnoc).